The chain runs to 323 residues: Fos-related antigen 2 (323 aa).

Residues 1–27 (MYQDYPGSFDTSSRGSSGSPGHPEPYS) are compositionally biased toward low complexity. Residues 1–31 (MYQDYPGSFDTSSRGSSGSPGHPEPYSAGAA) are disordered. The 64-residue stretch at 124-187 (EEKRRIRRER…EKLEFMLVAH (64 aa)) folds into the bZIP domain. The basic motif stretch occupies residues 126–128 (KRR). The leucine-zipper stretch occupies residues 129-136 (IRRERNKL). Disordered stretches follow at residues 194-214 (SPEE…TGAS) and 288-323 (ESPL…LLAL). A compositionally biased stretch (low complexity) spans 305–317 (SSSGDQSSDSLNS).

The protein belongs to the bZIP family. Fos subfamily. In terms of assembly, heterodimer with JUN.

It is found in the nucleus. This Gallus gallus (Chicken) protein is Fos-related antigen 2 (FOSL2).